The sequence spans 728 residues: Plakophilin-1 (728 aa).

A required for binding to single stranded DNA region spans residues methionine 1–lysine 235. The required for interaction with EIF4A1 stretch occupies residues methionine 1–leucine 287. At serine 4 the chain carries Phosphoserine; by RIPK4. Positions threonine 48–serine 69 are disordered. Phosphorylation in this region is required for cytoplasmic localization and protein stabilization regions lie at residues serine 54–serine 69 and arginine 117–serine 192. At serine 119 the chain carries Phosphoserine. Serine 120 carries the post-translational modification Phosphoserine; by RIPK4. Serine 122 carries the post-translational modification Phosphoserine. Position 143 is a phosphoserine; by RIPK4 (serine 143). Residues tyrosine 161–isoleucine 270 are required for WNT-mediated nuclear localization. ARM repeat units lie at residues serine 244–phenylalanine 275, glutamine 276–phenylalanine 317, arginine 318–serine 360, threonine 361–arginine 412, asparagine 413–alanine 443, asparagine 505–methionine 536, glycine 537–leucine 583, leucine 584–glycine 629, and asparagine 630–alanine 694.

The protein belongs to the beta-catenin family. As to quaternary structure, part of a complex that contains DSG3, PKP1, YAP1 and YWHAG; the complex is required for localization of DSG3 and YAP1 to the cell membrane in keratinocytes. Interacts (via N-terminus) with KRT5/CK5, KRT8/CK8 (via rod domain), KRT15/CK15 and KRT18/CK18 (via rod domain) as part of intermediate filaments. Interacts with VIM (via rod domain). Interacts with DSP. Interacts with DES. Interacts with FXR1; the interaction may facilitate the binding of PKP1 to PKP2, PKP3 and DSP mRNA. Interacts (via N-terminus) with EIF4A1; the interaction promotes EIF4A1 recruitment to the cap-dependent translation complex and EIF4A1 ATPase activity. Interacts with TJP1/ZO-1; the interaction facilitates TJP1/ZO-1 localization to the plasma membrane. Interacts (when phosphorylated) with YWHAG; the interaction results in translocation of PKP1 to the cytoplasm and loss of intercellular adhesion in keratinocytes. In terms of processing, phosphorylated by AKT2; required for interaction with YWHAG and subsequent localization away from desmosomes to the cytoplasm. Phosphorylation of Ser-119 by AKT2 promotes PKP1-driven cap-dependent mRNA translation and decreases intercellular adhesion, phosphorylation is promoted by insulin. Phosphorylation by RIPK4 at the N-terminus is required for its role in differentiation of keratinocytes and DSG1 localization at cell junctions. In terms of tissue distribution, expressed in undifferentiated keratinocytes of the epidermis at birth, expression increases as differentiation proceeds (at protein level). Expressed in the cervical loop during early tooth differentiation, expression is then present between ameloblasts, at ameloblast-ameloblast junctions and in the stratum intermedium during pre-secretory and secretory stages of tooth development (at protein level).

Its subcellular location is the nucleus. It localises to the cytoplasm. The protein localises to the perinuclear region. It is found in the cell junction. The protein resides in the desmosome. Its subcellular location is the cell membrane. It localises to the stress granule. Its function is as follows. A component of desmosome cell-cell junctions which are required for positive regulation of cellular adhesion. Plays a role in desmosome protein expression regulation and localization to the desmosomal plaque, thereby maintaining cell sheet integrity and anchorage of desmosomes to intermediate filaments. Required for localization of DSG3 and YAP1 to the cell membrane in keratinocytes in response to mechanical strain, via the formation of an interaction complex composed of DSG3, YAP1, PKP1 and YWHAG. Positively regulates differentiation of keratinocytes, potentially via promoting localization of DSG1 at desmosome cell junctions. Required for calcium-independent development and maturation of desmosome plaques specifically at lateral cell-cell contacts in differentiating keratinocytes. Plays a role in the maintenance of DSG3 protein abundance, DSG3 clustering and localization of these clusters to the cell membrane in keratinocytes. May also promote keratinocyte proliferation and morphogenesis during postnatal development. Required for tight junction inside-out transepidermal barrier function of the skin, and is thereby involved in neonatal survival possibly via maintenance of hydration levels. Promotes Wnt-mediated proliferation and differentiation of ameloblasts, via facilitating TJP1/ZO-1 localization to tight junctions. Binds single-stranded DNA (ssDNA), and may thereby play a role in sensing DNA damage and promoting cell survival. Positively regulates cap-dependent translation and as a result cell proliferation, via recruitment of EIF4A1 to the initiation complex and promotion of EIF4A1 ATPase activity. Regulates the mRNA stability and protein abundance of desmosome components PKP2, PKP3, DSC2 and DSP, potentially via its interaction with FXR1. The protein is Plakophilin-1 (Pkp1) of Mus musculus (Mouse).